Consider the following 351-residue polypeptide: Minor outer capsid protein P9 (351 aa).

2 disordered regions span residues 245–281 (GGVPAALPQPDTTDDESPVTKPGASAPTVSKGADQPE) and 288–307 (KKVDASKDAPPKAVSSGNVS). Residues 288–297 (KKVDASKDAP) are compositionally biased toward basic and acidic residues.

Belongs to the phytoreovirus minor outer capsid protein P9 family.

Its subcellular location is the virion. It localises to the host cytoplasm. Functionally, minor outer capsid protein. The protein is Minor outer capsid protein P9 of Rice dwarf virus (RDV).